A 270-amino-acid polypeptide reads, in one-letter code: Phosphatidylglycerol--prolipoprotein diacylglyceryl transferase (270 aa).

The next 4 membrane-spanning stretches (helical) occupy residues 19–39, 56–76, 92–112, and 116–136; these read FPVY…LWLA, LVLI…VIFE, QGGL…ILFA, and GVSF…GQAI. Arg138 lines the a 1,2-diacyl-sn-glycero-3-phospho-(1'-sn-glycerol) pocket. A run of 3 helical transmembrane segments spans residues 178-198, 206-226, and 236-256; these read HPTF…LLAL, GELF…VEGL, and LRIA…FIIV.

The protein belongs to the Lgt family.

Its subcellular location is the cell membrane. It catalyses the reaction L-cysteinyl-[prolipoprotein] + a 1,2-diacyl-sn-glycero-3-phospho-(1'-sn-glycerol) = an S-1,2-diacyl-sn-glyceryl-L-cysteinyl-[prolipoprotein] + sn-glycerol 1-phosphate + H(+). It functions in the pathway protein modification; lipoprotein biosynthesis (diacylglyceryl transfer). Functionally, catalyzes the transfer of the diacylglyceryl group from phosphatidylglycerol to the sulfhydryl group of the N-terminal cysteine of a prolipoprotein, the first step in the formation of mature lipoproteins. The chain is Phosphatidylglycerol--prolipoprotein diacylglyceryl transferase from Bacillus cereus (strain Q1).